The sequence spans 116 residues: Large ribosomal subunit protein uL24 (116 aa).

This sequence belongs to the universal ribosomal protein uL24 family. Part of the 50S ribosomal subunit.

Functionally, one of two assembly initiator proteins, it binds directly to the 5'-end of the 23S rRNA, where it nucleates assembly of the 50S subunit. Its function is as follows. One of the proteins that surrounds the polypeptide exit tunnel on the outside of the subunit. The chain is Large ribosomal subunit protein uL24 from Protochlamydia amoebophila (strain UWE25).